A 121-amino-acid polypeptide reads, in one-letter code: Large ribosomal subunit protein bL12 (121 aa).

The protein belongs to the bacterial ribosomal protein bL12 family. In terms of assembly, homodimer. Part of the ribosomal stalk of the 50S ribosomal subunit. Forms a multimeric L10(L12)X complex, where L10 forms an elongated spine to which 2 to 4 L12 dimers bind in a sequential fashion. Binds GTP-bound translation factors.

Forms part of the ribosomal stalk which helps the ribosome interact with GTP-bound translation factors. Is thus essential for accurate translation. The protein is Large ribosomal subunit protein bL12 of Mesomycoplasma hyopneumoniae (strain 232) (Mycoplasma hyopneumoniae).